The following is a 214-amino-acid chain: Potassium-transporting ATPase KdpC subunit (214 aa).

The helical transmembrane segment at 17-37 (LWVITALIYPFSMIAIGQILF) threads the bilayer.

Belongs to the KdpC family. The system is composed of three essential subunits: KdpA, KdpB and KdpC.

Its subcellular location is the cell inner membrane. Its function is as follows. Part of the high-affinity ATP-driven potassium transport (or Kdp) system, which catalyzes the hydrolysis of ATP coupled with the electrogenic transport of potassium into the cytoplasm. This subunit acts as a catalytic chaperone that increases the ATP-binding affinity of the ATP-hydrolyzing subunit KdpB by the formation of a transient KdpB/KdpC/ATP ternary complex. This chain is Potassium-transporting ATPase KdpC subunit, found in Microcystis aeruginosa (strain NIES-843 / IAM M-2473).